The primary structure comprises 140 residues: MPTINQLVRKGRKSKVVKSDSPALNKGYNSFIKSQTNVSSPQKRGVCTRVGTMTPKKPNSALRKYARVRLTNQIEVTAYIPGIGHNLQEHSVVLIRGGRVKDLPGVRYHIVRGALDTAGVDGRMQGRSKYGTKRPKAAKK.

2 disordered regions span residues methionine 1–aspartate 20 and glutamine 35–proline 55. Aspartate 102 carries the post-translational modification 3-methylthioaspartic acid. Positions aspartate 121–lysine 140 are disordered. Basic residues predominate over residues tyrosine 130–lysine 140.

Belongs to the universal ribosomal protein uS12 family. As to quaternary structure, part of the 30S ribosomal subunit. Contacts proteins S8 and S17. May interact with IF1 in the 30S initiation complex.

In terms of biological role, with S4 and S5 plays an important role in translational accuracy. Its function is as follows. Interacts with and stabilizes bases of the 16S rRNA that are involved in tRNA selection in the A site and with the mRNA backbone. Located at the interface of the 30S and 50S subunits, it traverses the body of the 30S subunit contacting proteins on the other side and probably holding the rRNA structure together. The combined cluster of proteins S8, S12 and S17 appears to hold together the shoulder and platform of the 30S subunit. This chain is Small ribosomal subunit protein uS12, found in Exiguobacterium sp. (strain ATCC BAA-1283 / AT1b).